A 1121-amino-acid chain; its full sequence is Potassium channel subfamily U member 1 (1121 aa).

Residues 1–24 lie on the Extracellular side of the membrane; it reads MSQTLLDSLNQKELTETSCTIEIQ. Residues 25–45 traverse the membrane as a helical segment; the sequence is AAFILSSLATFFGGLIILFLF. The Cytoplasmic segment spans residues 46–101; sequence RIALKSSRSWKYVKGPRGLLELFSSRRIEANPLRKLYFHGVFRQRIEMLLSAQTVV. The helical transmembrane segment at 102–122 threads the bilayer; that stretch reads GQVLVILVFVLSIGSLVIYFI. Residues 123 to 137 are Extracellular-facing; that stretch reads NSMDPVRRCSSYEDK. A helical membrane pass occupies residues 138-158; it reads IVHVDLSFNAFFSFYFGLRFW. Topologically, residues 159-165 are cytoplasmic; it reads AAEDKIK. Residues 166–186 form a helical membrane-spanning segment; sequence FWLEMNSIVDIFTIPPTFISY. Residues 187–188 lie on the Extracellular side of the membrane; it reads YL. Residues 189–209 form a helical; Voltage-sensor membrane-spanning segment; that stretch reads KSNWLGLRFLRALRLLELPKI. Over 210 to 226 the chain is Cytoplasmic; it reads LQILQVIKTSNSVKLSK. A helical membrane pass occupies residues 227 to 247; the sequence is LLSIVISTWFTAAGFLHLVEN. The Extracellular portion of the chain corresponds to 248 to 259; the sequence is SGDPWLNGRNSQ. The pore-forming intramembrane region spans 260-282; sequence TMSYFESIYLVTATMSTVGFGDV. The short motif at 276 to 279 is the Selectivity for potassium element; sequence TVGF. Residues 283 to 290 lie on the Extracellular side of the membrane; sequence VAKTSLGR. A helical transmembrane segment spans residues 291 to 311; it reads IFIVFFTLGSLILFANYIPEM. Topologically, residues 312-1121 are cytoplasmic; the sequence is VELFSTRKKY…LDASDIVQEK (810 aa). RCK N-terminal domains lie at 331 to 473 and 718 to 889; these read KKFI…DNIL and QNHI…DGML. Disordered stretches follow at residues 836 to 858 and 1052 to 1076; these read SPTP…KERK and DSSP…GSNF.

It belongs to the potassium channel family. Calcium-activated (TC 1.A.1.3) subfamily. KCa5.1/KCNU1 sub-subfamily. In terms of assembly, homotetramer; which constitutes the calcium-activated potassium channel. Interact with LRRC52; this interaction changes some channel gating properties, such as shifting gating to more negative potentials at a given pH. As to expression, testis-specific. Mainly expressed in spermatocytes. In terms of tissue distribution, expressed in testis, brain, eye and kidney.

It localises to the cell membrane. The protein localises to the cytoplasm. The catalysed reaction is K(+)(in) = K(+)(out). Its activity is regulated as follows. Regulated by changes in cytosolic pH; activated by alkalization. In contrast to human KCNU1 is not activated by Ca(2+) or Mg(2+). The auxiliary subunit LRRC52 shifts the activation of KCNU1 to more negative potentials at a given pH. Its function is as follows. Testis-specific potassium channel activated by both intracellular pH and membrane voltage that mediates export of K(+). Represents the primary spermatozoan K(+) current. The channel underlies a pH-triggered membrane hyperpolarization during the process of sperm capacitation, as sperm encounter the alkaline environment near the ovum in the female reproductive tract, thereby playing an essential for male fertility. The polypeptide is Potassium channel subfamily U member 1 (Kcnu1) (Mus musculus (Mouse)).